A 120-amino-acid polypeptide reads, in one-letter code: Large ribosomal subunit protein uL18 (120 aa).

It belongs to the universal ribosomal protein uL18 family. As to quaternary structure, part of the 50S ribosomal subunit; part of the 5S rRNA/L5/L18/L25 subcomplex. Contacts the 5S and 23S rRNAs.

Its function is as follows. This is one of the proteins that bind and probably mediate the attachment of the 5S RNA into the large ribosomal subunit, where it forms part of the central protuberance. This is Large ribosomal subunit protein uL18 from Bartonella henselae (strain ATCC 49882 / DSM 28221 / CCUG 30454 / Houston 1) (Rochalimaea henselae).